We begin with the raw amino-acid sequence, 134 residues long: Prefoldin subunit 4 (134 aa).

At alanine 2 the chain carries N-acetylalanine. Serine 125 carries the post-translational modification Phosphoserine.

Belongs to the prefoldin subunit beta family. In terms of assembly, heterohexamer of two PFD-alpha type and four PFD-beta type subunits. Interacts with URI1; the interaction is phosphorylation-dependent and occurs in a growth-dependent manner.

The protein localises to the nucleus. The protein resides in the cytoplasm. It is found in the mitochondrion. Its function is as follows. Binds specifically to cytosolic chaperonin (c-CPN) and transfers target proteins to it. Binds to nascent polypeptide chain and promotes folding in an environment in which there are many competing pathways for nonnative proteins. The polypeptide is Prefoldin subunit 4 (PFDN4) (Bos taurus (Bovine)).